A 214-amino-acid chain; its full sequence is Guanylate kinase (214 aa).

A Guanylate kinase-like domain is found at 6-192 (GTLYIISAPS…ALEDLKAIFR (187 aa)). 13–20 (APSGAGKT) is an ATP binding site.

It belongs to the guanylate kinase family.

The protein localises to the cytoplasm. It catalyses the reaction GMP + ATP = GDP + ADP. In terms of biological role, essential for recycling GMP and indirectly, cGMP. This is Guanylate kinase from Pseudomonas syringae pv. syringae (strain B728a).